The primary structure comprises 257 residues: Aspartate/glutamate leucyltransferase (257 aa).

This sequence belongs to the R-transferase family. Bpt subfamily.

The protein localises to the cytoplasm. It carries out the reaction N-terminal L-glutamyl-[protein] + L-leucyl-tRNA(Leu) = N-terminal L-leucyl-L-glutamyl-[protein] + tRNA(Leu) + H(+). The enzyme catalyses N-terminal L-aspartyl-[protein] + L-leucyl-tRNA(Leu) = N-terminal L-leucyl-L-aspartyl-[protein] + tRNA(Leu) + H(+). Its function is as follows. Functions in the N-end rule pathway of protein degradation where it conjugates Leu from its aminoacyl-tRNA to the N-termini of proteins containing an N-terminal aspartate or glutamate. The sequence is that of Aspartate/glutamate leucyltransferase from Phenylobacterium zucineum (strain HLK1).